Consider the following 255-residue polypeptide: U2 small nuclear ribonucleoprotein A' (255 aa).

LRR repeat units lie at residues 20–41, 43–64, 65–86, and 89–110; these read RDRE…GATL, QFDA…PLLR, RLKT…LDQA, and CLTE…DPLA. Residues 123 to 161 enclose the LRRCT domain; the sequence is NPVTNKKHYRLYVIYKVPQVRVLDFQKVKLKERQEAEKM. The residue at position 172 (K172) is an N6-acetyllysine; alternate. A Glycyl lysine isopeptide (Lys-Gly) (interchain with G-Cter in SUMO2); alternate cross-link involves residue K172. S178 and S197 each carry phosphoserine. The segment at 179–199 is disordered; the sequence is KTFNPGAGLPTDKKKGGPSAG. Residue K221 forms a Glycyl lysine isopeptide (Lys-Gly) (interchain with G-Cter in SUMO2) linkage. The disordered stretch occupies residues 222-255; it reads GLLQSGQIPGRERRSGPSDEGEEEIEDDTVTNGS. S236 and S255 each carry phosphoserine. The segment covering 240–255 has biased composition (acidic residues); that stretch reads DEGEEEIEDDTVTNGS.

It belongs to the U2 small nuclear ribonucleoprotein A family. Identified in the spliceosome B complex. Identified in the spliceosome C complex. Found in a pre-mRNA splicing complex with SFRS4, SFRS5, SNRNP70, SNRPA1, SRRM1 and SRRM2. Found in a pre-mRNA exonic splicing enhancer (ESE) complex with SNRNP70, SNRPA1, SRRM1 and TRA2B. Contributes to the binding of stem loop IV of U2 snRNA with SNRPB2.

It localises to the nucleus. Involved in pre-mRNA splicing as component of the spliceosome. Associated with sn-RNP U2, where it contributes to the binding of stem loop IV of U2 snRNA. This is U2 small nuclear ribonucleoprotein A' (Snrpa1) from Mus musculus (Mouse).